The chain runs to 129 residues: Transcriptional activator protein (129 aa).

The tract at residues 1 to 20 is disordered; it reads MRSSSPSQPPSIKRAHRQAK. The Nuclear localization signal signature appears at 13 to 28; sequence KRAHRQAKKRAIRRRR. Residues 33–50 fold into a zinc finger; the sequence is CGCSIYFHLGCAGHGFTH. The interval 73–118 is disordered; sequence LFQDTQSRGPTVYQNEGIPRTDTVQPQPEESVASPQSLPELPSLDD. 2 stretches are compositionally biased toward polar residues: residues 74–86 and 94–109; these read FQDT…TVYQ and DTVQ…SPQS. S109 carries the phosphoserine; by host modification. The transactivation stretch occupies residues 115–129; that stretch reads SLDDVDDSFWINLFS.

It belongs to the geminiviridae transcriptional activator protein family. Monomer. Homodimer. Homooligomer. Self-interaction correlates with nuclear localization and efficient activation of transcription. Monomers suppress local silencing by interacting with and inactivating host adenosine kinase 2 (ADK2) in the cytoplasm. Interacts with and inhibits host SNF1 kinase. Phosphorylated at Ser-109 by A.thaliana KIN10.

The protein resides in the host nucleus. The protein localises to the host cytoplasm. Its function is as follows. Strong activator of the late viral genes promoters. Enhances the expression of the capsid protein and nuclear shuttle protein. Acts as a suppressor of RNA-mediated gene silencing, also known as post-transcriptional gene silencing (PTGS), a mechanism of plant viral defense that limits the accumulation of viral RNAs. Suppresses the host RNA silencing by inhibiting adenosine kinase 2 (ADK2), a kinase involved in a general methylation pathway. Also suppresses the host basal defense by interacting with and inhibiting SNF1 kinase, a key regulator of cell metabolism implicated in innate antiviral defense. Determines pathogenicity. The chain is Transcriptional activator protein from Nicotiana tabacum (Common tobacco).